Consider the following 461-residue polypeptide: Homogentisate 1,2-dioxygenase (461 aa).

Fe cation-binding residues include H341, E347, and H377.

The protein belongs to the homogentisate dioxygenase family. Fe cation serves as cofactor.

The catalysed reaction is homogentisate + O2 = 4-maleylacetoacetate + H(+). It functions in the pathway amino-acid degradation; L-phenylalanine degradation; acetoacetate and fumarate from L-phenylalanine: step 4/6. In Arabidopsis thaliana (Mouse-ear cress), this protein is Homogentisate 1,2-dioxygenase (HGO).